The chain runs to 252 residues: Gamma carbonic anhydrase-like 1, mitochondrial (252 aa).

The N-terminal 29 residues, methionine 1–alanine 29, are a transit peptide targeting the mitochondrion. Residues arginine 99–aspartate 101 and glutamine 114–glutamate 115 each bind substrate. Zn(2+) is bound at residue histidine 120. Positions 148, 160, and 227 each coordinate substrate.

The protein belongs to the gamma-class carbonic anhydrase family. As to quaternary structure, component of the mitochondrial oxidoreductase respiratory chain complex I; element of the extra matrix-exposed domain, which is attached to the membrane arm of this complex. Interacts with GAMMACA2.

It localises to the mitochondrion membrane. Involved in complex I assembly in mitochondria and respiration. The polypeptide is Gamma carbonic anhydrase-like 1, mitochondrial (GAMMACAL1) (Arabidopsis thaliana (Mouse-ear cress)).